Reading from the N-terminus, the 518-residue chain is Ethanolamine kinase (518 aa).

The segment covering 1-19 (MGTETKSNSYTGQISTSGG) has biased composition (polar residues). Residues 1 to 88 (MGTETKSNSY…DIRAKPEDKS (88 aa)) are disordered. Residues 33–68 (QTVNQQTLSLSQSNQVQNQLNSHSNSNSYPNPSGSE) show a composition bias toward low complexity. Positions 69-88 (NKNENEQNSRDIRAKPEDKS) are enriched in basic and acidic residues. Phosphoserine is present on residues serine 190 and serine 194.

The protein belongs to the choline/ethanolamine kinase family.

It is found in the cytoplasm. It carries out the reaction ethanolamine + ATP = phosphoethanolamine + ADP + H(+). It participates in phospholipid metabolism; phosphatidylethanolamine biosynthesis; phosphatidylethanolamine from ethanolamine: step 1/3. Its function is as follows. Highly specific for ethanolamine phosphorylation. May be a rate-controlling step in phosphatidylethanolamine biosynthesis. The polypeptide is Ethanolamine kinase (eas) (Drosophila melanogaster (Fruit fly)).